An 830-amino-acid chain; its full sequence is BLOC-2 complex member HPS5 homolog (830 aa).

WD repeat units lie at residues 25-64, 67-106, and 114-153; these read RNNS…FLAI, SQLG…STDG, and GGPA…GRNI. Residues 578-604 adopt a coiled-coil conformation; sequence DTETIVRLLRKLETLMEENEEPNARLK.

The protein belongs to the HPS5 family.

Its function is as follows. Has a role in the biogenesis of eye pigment granules. Eye pigment granules are specialized forms of late endosomes or lysosomes. Biogenesis of pigment granules in the eye requires molecular components required for protein delivery to lysosomes. The protein is BLOC-2 complex member HPS5 homolog of Anopheles gambiae (African malaria mosquito).